The sequence spans 180 residues: Der GTPase-activating protein YihI (180 aa).

Disordered regions lie at residues 1–90 (MSRK…QERR) and 145–180 (EPEEDEDFTAPAVKGSRNDDDLLADFDDINFDDYKG). Positions 23–32 (NRTESDVEGR) are enriched in basic and acidic residues. A compositionally biased stretch (basic residues) spans 33–43 (LRKRAKKRKGL). Basic and acidic residues-rich tracts occupy residues 50-68 (SDAEEQKRQAAAQKRDPRL) and 80-90 (PVKKQTKQERR). The segment covering 165–180 (DLLADFDDINFDDYKG) has biased composition (acidic residues).

This sequence belongs to the YihI family. In terms of assembly, interacts with Der.

Functionally, a GTPase-activating protein (GAP) that modifies Der/EngA GTPase function. May play a role in ribosome biogenesis. This chain is Der GTPase-activating protein YihI, found in Vibrio campbellii (strain ATCC BAA-1116).